A 478-amino-acid polypeptide reads, in one-letter code: ATP synthase subunit beta (478 aa).

Residue glycine 158–threonine 165 coordinates ATP.

It belongs to the ATPase alpha/beta chains family. As to quaternary structure, F-type ATPases have 2 components, CF(1) - the catalytic core - and CF(0) - the membrane proton channel. CF(1) has five subunits: alpha(3), beta(3), gamma(1), delta(1), epsilon(1). CF(0) has three main subunits: a(1), b(2) and c(9-12). The alpha and beta chains form an alternating ring which encloses part of the gamma chain. CF(1) is attached to CF(0) by a central stalk formed by the gamma and epsilon chains, while a peripheral stalk is formed by the delta and b chains.

It is found in the cell inner membrane. It carries out the reaction ATP + H2O + 4 H(+)(in) = ADP + phosphate + 5 H(+)(out). Produces ATP from ADP in the presence of a proton gradient across the membrane. The catalytic sites are hosted primarily by the beta subunits. The sequence is that of ATP synthase subunit beta from Rhizobium leguminosarum bv. trifolii (strain WSM2304).